We begin with the raw amino-acid sequence, 278 residues long: Hydroxyethylthiazole kinase (278 aa).

A substrate-binding site is contributed by Met-51. 2 residues coordinate ATP: Arg-127 and Ser-173. Gly-201 contacts substrate.

This sequence belongs to the Thz kinase family. Mg(2+) is required as a cofactor.

It carries out the reaction 5-(2-hydroxyethyl)-4-methylthiazole + ATP = 4-methyl-5-(2-phosphooxyethyl)-thiazole + ADP + H(+). It participates in cofactor biosynthesis; thiamine diphosphate biosynthesis; 4-methyl-5-(2-phosphoethyl)-thiazole from 5-(2-hydroxyethyl)-4-methylthiazole: step 1/1. Catalyzes the phosphorylation of the hydroxyl group of 4-methyl-5-beta-hydroxyethylthiazole (THZ). The sequence is that of Hydroxyethylthiazole kinase from Leptothrix cholodnii (strain ATCC 51168 / LMG 8142 / SP-6) (Leptothrix discophora (strain SP-6)).